A 398-amino-acid polypeptide reads, in one-letter code: Acetate kinase (398 aa).

Asn-7 contacts Mg(2+). Residue Lys-14 participates in ATP binding. Position 92 (Arg-92) interacts with substrate. Asp-149 acts as the Proton donor/acceptor in catalysis. ATP contacts are provided by residues 209–213 (HLGNG), 284–286 (DFR), and 332–336 (GVGEN). Mg(2+) is bound at residue Glu-385.

Belongs to the acetokinase family. In terms of assembly, homodimer. It depends on Mg(2+) as a cofactor. Mn(2+) is required as a cofactor.

It localises to the cytoplasm. The catalysed reaction is acetate + ATP = acetyl phosphate + ADP. It functions in the pathway metabolic intermediate biosynthesis; acetyl-CoA biosynthesis; acetyl-CoA from acetate: step 1/2. In terms of biological role, catalyzes the formation of acetyl phosphate from acetate and ATP. Can also catalyze the reverse reaction. This is Acetate kinase from Clostridioides difficile (strain 630) (Peptoclostridium difficile).